The following is a 340-amino-acid chain: N-acetyl-gamma-glutamyl-phosphate reductase (340 aa).

The active site involves C146.

This sequence belongs to the NAGSA dehydrogenase family. Type 1 subfamily.

The protein resides in the cytoplasm. It catalyses the reaction N-acetyl-L-glutamate 5-semialdehyde + phosphate + NADP(+) = N-acetyl-L-glutamyl 5-phosphate + NADPH + H(+). It functions in the pathway amino-acid biosynthesis; L-arginine biosynthesis; N(2)-acetyl-L-ornithine from L-glutamate: step 3/4. Catalyzes the NADPH-dependent reduction of N-acetyl-5-glutamyl phosphate to yield N-acetyl-L-glutamate 5-semialdehyde. The sequence is that of N-acetyl-gamma-glutamyl-phosphate reductase from Streptococcus thermophilus (strain ATCC BAA-491 / LMD-9).